Here is a 240-residue protein sequence, read N- to C-terminus: MGRAFEYRRAAKEKRWDKMSKVFPKLAKAITLAAKEGGSEPDTNAKLRTAILNAKAQNMPKDNIDAAIKRASSKEGNLSEITYEGKANFGVLIIMECMTDNPTRTIANLKSYFNKTQGASIVPNGSLEFMFNRKSVFECLKSEVENLKLSLEDLEFALIDYGLEELEEVGDKIIIRGDYNSFKLLNEGFESLRLPIIKAGLQRIATTPIELNDEQMELTEKLLDRIEDDDDVVALYTNIE.

It belongs to the TACO1 family.

The protein resides in the cytoplasm. This is Probable transcriptional regulatory protein jhp_0149 from Helicobacter pylori (strain J99 / ATCC 700824) (Campylobacter pylori J99).